A 361-amino-acid chain; its full sequence is Large ribosomal subunit protein mL45 (361 aa).

Residues 319 to 361 (EPPKELSAGDAEVKQVDSVGEQSKEQLPLATPVESHTKPSLAI) are disordered.

It belongs to the mitochondrion-specific ribosomal protein mL45 family.

It localises to the mitochondrion. The protein is Large ribosomal subunit protein mL45 (mRpL45) of Drosophila melanogaster (Fruit fly).